The following is a 121-amino-acid chain: Ribosome-binding factor A (121 aa).

This sequence belongs to the RbfA family. As to quaternary structure, monomer. Binds 30S ribosomal subunits, but not 50S ribosomal subunits or 70S ribosomes.

It is found in the cytoplasm. Functionally, one of several proteins that assist in the late maturation steps of the functional core of the 30S ribosomal subunit. Associates with free 30S ribosomal subunits (but not with 30S subunits that are part of 70S ribosomes or polysomes). Required for efficient processing of 16S rRNA. May interact with the 5'-terminal helix region of 16S rRNA. The polypeptide is Ribosome-binding factor A (Paraburkholderia phytofirmans (strain DSM 17436 / LMG 22146 / PsJN) (Burkholderia phytofirmans)).